Consider the following 289-residue polypeptide: ATP synthase gamma chain (289 aa).

It belongs to the ATPase gamma chain family. In terms of assembly, F-type ATPases have 2 components, CF(1) - the catalytic core - and CF(0) - the membrane proton channel. CF(1) has five subunits: alpha(3), beta(3), gamma(1), delta(1), epsilon(1). CF(0) has three main subunits: a, b and c.

It localises to the cell membrane. Produces ATP from ADP in the presence of a proton gradient across the membrane. The gamma chain is believed to be important in regulating ATPase activity and the flow of protons through the CF(0) complex. The sequence is that of ATP synthase gamma chain from Hamiltonella defensa subsp. Acyrthosiphon pisum (strain 5AT).